The primary structure comprises 197 residues: Recombination protein RecR (197 aa).

A C4-type zinc finger spans residues 56 to 71 (CNVCFHFSADPICEIC). Positions 79 to 173 (QTICVVADSR…KVTRIAFGLP (95 aa)) constitute a Toprim domain.

Belongs to the RecR family.

Its function is as follows. May play a role in DNA repair. It seems to be involved in an RecBC-independent recombinational process of DNA repair. It may act with RecF and RecO. The sequence is that of Recombination protein RecR from Rippkaea orientalis (strain PCC 8801 / RF-1) (Cyanothece sp. (strain PCC 8801)).